The chain runs to 66 residues: Large ribosomal subunit protein uL29 (66 aa).

It belongs to the universal ribosomal protein uL29 family.

The sequence is that of Large ribosomal subunit protein uL29 from Borrelia recurrentis (strain A1).